Reading from the N-terminus, the 91-residue chain is DNA-directed RNA polymerase subunit omega (91 aa).

It belongs to the RNA polymerase subunit omega family. As to quaternary structure, the RNAP catalytic core consists of 2 alpha, 1 beta, 1 beta' and 1 omega subunit. When a sigma factor is associated with the core the holoenzyme is formed, which can initiate transcription.

It carries out the reaction RNA(n) + a ribonucleoside 5'-triphosphate = RNA(n+1) + diphosphate. Functionally, promotes RNA polymerase assembly. Latches the N- and C-terminal regions of the beta' subunit thereby facilitating its interaction with the beta and alpha subunits. The polypeptide is DNA-directed RNA polymerase subunit omega (Proteus mirabilis (strain HI4320)).